Here is a 124-residue protein sequence, read N- to C-terminus: MSYINKPGKTSAWRVMTVRQQVSAVLAYGKIETTLKKAKNTQKRLDKLITLAKVDNFNNRRQVKKWLLNTNLFDVDQLMDHLFSKVAPKYEKTPGGYSRVLKLGPRRGDATEMAILQLTDAKYK.

This sequence belongs to the bacterial ribosomal protein bL17 family. In terms of assembly, part of the 50S ribosomal subunit. Contacts protein L32.

This Mycoplasma pneumoniae (strain ATCC 29342 / M129 / Subtype 1) (Mycoplasmoides pneumoniae) protein is Large ribosomal subunit protein bL17.